Consider the following 152-residue polypeptide: MNKIESITEDLITPIVEAEQFELVDIEFKKEGPHKYLRVYIDKPGGITLDDCQKVSEGLSKKLDEADPIVENYFLEVSSPGLDRPLKREVDFLKFKGEMIELKLYEAIDGQKTIEGELVGLIDDKIVIKISETEEVEMPREKVAITKLAIKF.

The protein belongs to the RimP family.

It localises to the cytoplasm. Functionally, required for maturation of 30S ribosomal subunits. The sequence is that of Ribosome maturation factor RimP from Alkaliphilus metalliredigens (strain QYMF).